Here is a 212-residue protein sequence, read N- to C-terminus: MKNVKIALTKGRLEKKAIEIFKTININTRELEDKGRKLIFNCENEEYNIELFLVKAKDVETYVEYGAADIGIVGKDTLMETNKEFYEVLDLNVGKCKFALAALPSFKLDQGYNRKKIATKYPNIAREYFRKKGMDVELIKIEGSVELGPIVGLADAIVDIVETGNTLRENGLVVVEDICEISARMIVNKASMKTKKDEIIKIIENVSEVIRQ.

It belongs to the ATP phosphoribosyltransferase family. Short subfamily. In terms of assembly, heteromultimer composed of HisG and HisZ subunits.

Its subcellular location is the cytoplasm. It catalyses the reaction 1-(5-phospho-beta-D-ribosyl)-ATP + diphosphate = 5-phospho-alpha-D-ribose 1-diphosphate + ATP. It functions in the pathway amino-acid biosynthesis; L-histidine biosynthesis; L-histidine from 5-phospho-alpha-D-ribose 1-diphosphate: step 1/9. In terms of biological role, catalyzes the condensation of ATP and 5-phosphoribose 1-diphosphate to form N'-(5'-phosphoribosyl)-ATP (PR-ATP). Has a crucial role in the pathway because the rate of histidine biosynthesis seems to be controlled primarily by regulation of HisG enzymatic activity. This chain is ATP phosphoribosyltransferase, found in Clostridium botulinum (strain ATCC 19397 / Type A).